Reading from the N-terminus, the 24-residue chain is Xenoposin precursor fragment B2 (24 aa).

As to expression, expressed by the skin glands.

It localises to the secreted. Has antimicrobial activity against Gram-negative bacterium E.coli ATCC 25922 (MIC=100 uM), Gram-positive bacterium S.auerus ATCC 25923 (MIC=25 uM). This Xenopus borealis (Kenyan clawed frog) protein is Xenoposin precursor fragment B2.